Consider the following 648-residue polypeptide: Putative potassium transport protein DDB_G0292412 (648 aa).

A helical membrane pass occupies residues 48-68 (LFLLVILVQLGSTVLLTLPIV). The N-linked (GlcNAc...) asparagine glycan is linked to N81. 2 disordered regions span residues 106-145 (HDFK…DDND) and 223-261 (QQQQ…DSQS). Residues 110–129 (DDDDENDNNNNEENDDNDDE) show a composition bias toward acidic residues. Residues 199–227 (IIQQQQQQQQQQQQQQQQQQQQQQQQQQQ) adopt a coiled-coil conformation. Residues N239, N243, N247, N248, N254, and N257 are each glycosylated (N-linked (GlcNAc...) asparagine). 6 helical membrane passes run 313–333 (LLVI…ISIG), 353–373 (GWWW…LALF), 385–405 (FLLI…PVFL), 443–463 (VQLF…MALL), 472–491 (NMNY…STRT), and 505–525 (SVLL…IISL). An N-linked (GlcNAc...) asparagine glycan is attached at N536. The next 3 helical transmembrane spans lie at 550 to 570 (IFVP…LLES), 571 to 591 (GVIT…NVGL), and 592 to 612 (SISI…MLAG).

Belongs to the TrkH potassium transport family.

The protein localises to the membrane. Functionally, may function as a potassium transporter. The polypeptide is Putative potassium transport protein DDB_G0292412 (Dictyostelium discoideum (Social amoeba)).